Reading from the N-terminus, the 113-residue chain is UPF0482 protein YnfB (113 aa).

The signal sequence occupies residues 1–28 (MKITLSKRIGLLAILLPCALALSTTVHA).

It belongs to the UPF0482 family.

In Escherichia coli O8 (strain IAI1), this protein is UPF0482 protein YnfB.